A 269-amino-acid chain; its full sequence is Zinc finger protein SNAI2 (269 aa).

The tract at residues methionine 1 to serine 20 is SNAG domain. The tract at residues serine 81–lysine 117 is disordered. C2H2-type zinc fingers lie at residues phenylalanine 129 to histidine 151, phenylalanine 160 to histidine 182, cysteine 186 to histidine 208, and phenylalanine 214 to histidine 236. The segment at tyrosine 242–cysteine 265 adopts a C2H2-type 5; atypical zinc-finger fold.

The protein belongs to the snail C2H2-type zinc-finger protein family. As to quaternary structure, interacts (via SNAG domain) with LIMD1 (via LIM domains), WTIP (via LIM domains) and AJUBA (via LIM domains). Interacts (via zinc fingers) with KPNA2, KPNB1, and TNPO1. May interact (via zinc fingers) with IPO7. In terms of processing, phosphorylated by GSK3B. Once phosphorylated, it becomes a target for ubiquitination. Post-translationally, ubiquitinated by the SCF(FBXO11) complex; ubiquitination requires previous GSK3B-mediated SNAI2 phosphorylation.

The protein localises to the nucleus. Its subcellular location is the cytoplasm. In terms of biological role, transcriptional repressor that modulates both activator-dependent and basal transcription. Involved in the generation and migration of neural crest cells. Plays a role in mediating RAF1-induced transcriptional repression of the TJ protein, occludin (OCLN) and subsequent oncogenic transformation of epithelial cells. Represses BRCA2 expression by binding to its E2-box-containing silencer and recruiting CTBP1 and HDAC1 in breast cells. In epidermal keratinocytes, binds to the E-box in ITGA3 promoter and represses its transcription. Involved in the regulation of ITGB1 and ITGB4 expression and cell adhesion and proliferation in epidermal keratinocytes. Binds to E-box2 domain of BSG and activates its expression during TGFB1-induced epithelial-mesenchymal transition (EMT) in hepatocytes. Represses E-Cadherin/CDH1 transcription via E-box elements. Involved in osteoblast maturation. Binds to RUNX2 and SOC9 promoters and may act as a positive and negative transcription regulator, respectively, in osteoblasts. Binds to CXCL12 promoter via E-box regions in mesenchymal stem cells and osteoblasts. Plays an essential role in TWIST1-induced EMT and its ability to promote invasion and metastasis. The sequence is that of Zinc finger protein SNAI2 (Snai2) from Mus musculus (Mouse).